The primary structure comprises 412 residues: Mannose-6-phosphate isomerase (412 aa).

Glutamine 99, histidine 101, glutamate 126, and histidine 265 together coordinate Zn(2+). Arginine 284 is an active-site residue.

The protein belongs to the mannose-6-phosphate isomerase type 1 family. Requires Zn(2+) as cofactor.

It localises to the cytoplasm. Its subcellular location is the nucleus. It carries out the reaction D-mannose 6-phosphate = D-fructose 6-phosphate. Its pathway is nucleotide-sugar biosynthesis; GDP-alpha-D-mannose biosynthesis; alpha-D-mannose 1-phosphate from D-fructose 6-phosphate: step 1/2. Involved in the synthesis of the GDP-mannose and dolichol-phosphate-mannose required for a number of critical mannosyl transfer reactions. The polypeptide is Mannose-6-phosphate isomerase (pmi40) (Schizosaccharomyces pombe (strain 972 / ATCC 24843) (Fission yeast)).